A 71-amino-acid polypeptide reads, in one-letter code: Disintegrin ussuristatin-2 (71 aa).

The region spanning 1 to 71 is the Disintegrin domain; sequence EAGEECDCGA…QSADCPRNGF (71 aa). 6 disulfide bridges follow: cysteine 6–cysteine 21, cysteine 8–cysteine 16, cysteine 15–cysteine 38, cysteine 29–cysteine 35, cysteine 34–cysteine 59, and cysteine 47–cysteine 66. The short motif at 51–53 is the Cell attachment site; atypical (KGD) element; sequence KGD.

This sequence belongs to the venom metalloproteinase (M12B) family. P-II subfamily. P-IId sub-subfamily. Homodimer. In terms of tissue distribution, expressed by the venom gland.

The protein resides in the secreted. Its function is as follows. Suppress platelet aggregation induced by ADP, collagen, thrombin, and epinephrine (IC(50)=170-330 nM). Also dose-dependently inhibits the adhesion of human melanoma cells to fibrinogen but not to fibronectin. This is Disintegrin ussuristatin-2 from Gloydius ussuriensis (Ussuri mamushi).